A 617-amino-acid chain; its full sequence is MHDMTKDIEYLTADYDNEKSSIQSVIDAIEGQDFLDVDTTMDDAVSDVSSLDEDGAISLTSSVVGPQGSKLMGYYQNELYDYASQLDSKMKEIIDTPFIEDIDKAFKGITNVKLENILIKNGGGHGRDTYGASGKIAKGDAKKSDSDVYSIDEILKSDQEFVKVIDQHYKEMKKEDKKLSKSDFEKMMTQGASCDYMTVAEAEELEEQKKKEEAIEIAALAGMVVLSCINPVAGAVAIGAYSAYSAANAATGKNIVTGRKLSKEERIMEGLSLIPLPGMGFLKGAGKSLMKLGFKGGEKFAVKTGLQKTMQQAVSRISPKMGMMKNSVLNQSRNFAQNTHVGQMLSNMRGQATHTVQQSRNWIGQQAQNVKRIVNNGLDKEIAHPFKQQLAPAGMGGIKFAETTTLRNMGQNIKRAVTPQNHVTHGPKDSMVRSEGKHSISSHEMNSSKYVESPNYTKVEFGEHYARLRPKKLKANIEYTTPTGHIYRTDHKGRIKEVYVDNLSLKDGDRNSHAQRTVGGEDRLPDDDGGHLIARMFGGSKDIDNLVAQSKFINRPFKEKGHWYNLEKEWQEFLNSGKEVKNIKMEVKYSGNSQRPTIFKVEYEINGERNIRRILNK.

Residues 420–448 (QNHVTHGPKDSMVRSEGKHSISSHEMNSS) are disordered. Positions 426-438 (GPKDSMVRSEGKH) are enriched in basic and acidic residues.

Belongs to the EssD family. As to quaternary structure, interacts (via C-terminal) with EssG; this interaction blocks EssD activity. Interacts with EssE.

It localises to the secreted. It is found in the cell membrane. In terms of biological role, component of the type VII secretion system (Ess). Plays a role in Ess secretion during infection. Required for the efficient secretion of EsxA. Required for abscess formation and staphylococcal persistence in host tissue. Possesses a toxic DNase activity that is modulated by EssG by forming a nuclease toxin-antitoxin pair. This nuclease toxin targets competitor bacteria. In Staphylococcus aureus (strain Newman), this protein is Type VII secretion systems protein EssD.